A 487-amino-acid polypeptide reads, in one-letter code: MRGNLRRPGPAGTAGPGRTGIRTSADGGRARPRTGAGTGVRAGVRSGVVGVGAGIRTGVRWKISAAIALVGALVALALSLVVHNAARVSMLDNARDLADERIQVAERMYEAGRAQSFGVKLDDPAIPRDLMMKVTQGRRATYVADGPHGVPDIWAAVPLKDGRVLSLHTRFTDRSADIMKDLDQALIIGSIAVVFGGSALGVLIGGQLSRRLRKAAAAANQVAQGERDVRVRDAIGGVVRDETDDLARAVDAMADALQQRIEAERRVTADIAHELRTPVTGLLTAAELLPPGRPTELVRDRAQAMRTLVEDVLEVARLDGASERAELQDIMLGEFVSRRVAAKDADIEVRVVHESEVTTDPRRLERVLFNLLANAARHGKPPIEVSVEGRVIRVRDHGPGFPEELLADGPRRFRTGSTDRAGHGHGLGLTIAAGQARVLGARLTFRNVRPAGAPGDVPAEGAVAVLWLPEHAPTNTGSFPMLPLSGG.

Low complexity predominate over residues 1-11; that stretch reads MRGNLRRPGPA. Positions 1-41 are disordered; the sequence is MRGNLRRPGPAGTAGPGRTGIRTSADGGRARPRTGAGTGVR. The next 2 helical transmembrane spans lie at 63–83 and 185–205; these read ISAA…LVVH and ALII…VLIG. Residues 206 to 262 enclose the HAMP domain; the sequence is GQLSRRLRKAAAAANQVAQGERDVRVRDAIGGVVRDETDDLARAVDAMADALQQRIE. Positions 270 to 472 constitute a Histidine kinase domain; sequence DIAHELRTPV…VAVLWLPEHA (203 aa). Histidine 273 carries the post-translational modification Phosphohistidine; by autocatalysis.

Its subcellular location is the cell membrane. It carries out the reaction ATP + protein L-histidine = ADP + protein N-phospho-L-histidine.. This Streptomyces avermitilis (strain ATCC 31267 / DSM 46492 / JCM 5070 / NBRC 14893 / NCIMB 12804 / NRRL 8165 / MA-4680) protein is Sensor protein CseC (cseC).